The chain runs to 254 residues: Small ribosomal subunit protein uS3 (254 aa).

One can recognise a KH type-2 domain in the interval 38–106; sequence IRKYVLARIP…DVQINIFEIK (69 aa). Residues 215-238 show a composition bias toward low complexity; the sequence is NVGNAASGASSSSNNDNASPNQGG. Positions 215-254 are disordered; the sequence is NVGNAASGASSSSNNDNASPNQGGPRRKRGGEGNRKKSNK. Basic and acidic residues predominate over residues 244 to 254; sequence GGEGNRKKSNK.

Belongs to the universal ribosomal protein uS3 family. As to quaternary structure, part of the 30S ribosomal subunit. Forms a tight complex with proteins S10 and S14.

In terms of biological role, binds the lower part of the 30S subunit head. Binds mRNA in the 70S ribosome, positioning it for translation. The chain is Small ribosomal subunit protein uS3 from Cytophaga hutchinsonii (strain ATCC 33406 / DSM 1761 / CIP 103989 / NBRC 15051 / NCIMB 9469 / D465).